The sequence spans 83 residues: Transmembrane protein EP84R (83 aa).

2 helical membrane passes run 31 to 51 and 59 to 79; these read VIGIILLVISLLLIFIGIIIL and AGSVLVVLSLILGGGGFFLIY.

This sequence belongs to the asfivirus EP84R family.

The protein resides in the virion membrane. The protein is Transmembrane protein EP84R of Ornithodoros (relapsing fever ticks).